The primary structure comprises 192 residues: Phosphoheptose isomerase (192 aa).

The 156-residue stretch at Leu37–Lys192 folds into the SIS domain. Residue Asn52–Gly54 participates in substrate binding. Zn(2+)-binding residues include His61 and Glu65. Residues Glu65, Asn93 to Asp94, Ser119 to Ser121, Ser124, and Gln172 contribute to the substrate site. Residues Gln172 and His180 each coordinate Zn(2+).

It belongs to the SIS family. GmhA subfamily. As to quaternary structure, homotetramer. Requires Zn(2+) as cofactor.

It localises to the cytoplasm. The catalysed reaction is 2 D-sedoheptulose 7-phosphate = D-glycero-alpha-D-manno-heptose 7-phosphate + D-glycero-beta-D-manno-heptose 7-phosphate. It functions in the pathway carbohydrate biosynthesis; D-glycero-D-manno-heptose 7-phosphate biosynthesis; D-glycero-alpha-D-manno-heptose 7-phosphate and D-glycero-beta-D-manno-heptose 7-phosphate from sedoheptulose 7-phosphate: step 1/1. In terms of biological role, catalyzes the isomerization of sedoheptulose 7-phosphate in D-glycero-D-manno-heptose 7-phosphate. In Escherichia coli O7:K1 (strain IAI39 / ExPEC), this protein is Phosphoheptose isomerase.